Here is a 391-residue protein sequence, read N- to C-terminus: 1-deoxy-D-xylulose 5-phosphate reductoisomerase (391 aa).

Thr-17, Gly-18, Ser-19, Ile-20, Asn-47, and Asn-130 together coordinate NADPH. Lys-131 serves as a coordination point for 1-deoxy-D-xylulose 5-phosphate. Glu-132 contributes to the NADPH binding site. Asp-156 lines the Mn(2+) pocket. Residues Ser-157, Glu-158, Ser-182, and His-205 each coordinate 1-deoxy-D-xylulose 5-phosphate. Glu-158 serves as a coordination point for Mn(2+). Gly-211 is a binding site for NADPH. Residues Ser-218, Asn-223, Lys-224, and Glu-227 each contribute to the 1-deoxy-D-xylulose 5-phosphate site. Residue Glu-227 coordinates Mn(2+).

The protein belongs to the DXR family. The cofactor is Mg(2+). Requires Mn(2+) as cofactor.

It catalyses the reaction 2-C-methyl-D-erythritol 4-phosphate + NADP(+) = 1-deoxy-D-xylulose 5-phosphate + NADPH + H(+). It functions in the pathway isoprenoid biosynthesis; isopentenyl diphosphate biosynthesis via DXP pathway; isopentenyl diphosphate from 1-deoxy-D-xylulose 5-phosphate: step 1/6. Functionally, catalyzes the NADPH-dependent rearrangement and reduction of 1-deoxy-D-xylulose-5-phosphate (DXP) to 2-C-methyl-D-erythritol 4-phosphate (MEP). The polypeptide is 1-deoxy-D-xylulose 5-phosphate reductoisomerase (Sinorhizobium fredii (strain NBRC 101917 / NGR234)).